Consider the following 466-residue polypeptide: Glutamate--tRNA ligase (466 aa).

Positions 11 to 21 (PSPTGFIHLGN) match the 'HIGH' region motif. The 'KMSKS' region motif lies at 243–247 (KMSKR). Lys-246 contacts ATP.

Belongs to the class-I aminoacyl-tRNA synthetase family. Glutamate--tRNA ligase type 1 subfamily. Monomer.

The protein localises to the cytoplasm. It carries out the reaction tRNA(Glu) + L-glutamate + ATP = L-glutamyl-tRNA(Glu) + AMP + diphosphate. In terms of biological role, catalyzes the attachment of glutamate to tRNA(Glu) in a two-step reaction: glutamate is first activated by ATP to form Glu-AMP and then transferred to the acceptor end of tRNA(Glu). This is Glutamate--tRNA ligase from Cupriavidus taiwanensis (strain DSM 17343 / BCRC 17206 / CCUG 44338 / CIP 107171 / LMG 19424 / R1) (Ralstonia taiwanensis (strain LMG 19424)).